Here is an 80-residue protein sequence, read N- to C-terminus: Exodeoxyribonuclease 7 small subunit (80 aa).

The protein belongs to the XseB family. As to quaternary structure, heterooligomer composed of large and small subunits.

It localises to the cytoplasm. It carries out the reaction Exonucleolytic cleavage in either 5'- to 3'- or 3'- to 5'-direction to yield nucleoside 5'-phosphates.. Functionally, bidirectionally degrades single-stranded DNA into large acid-insoluble oligonucleotides, which are then degraded further into small acid-soluble oligonucleotides. In Pseudomonas fluorescens (strain ATCC BAA-477 / NRRL B-23932 / Pf-5), this protein is Exodeoxyribonuclease 7 small subunit.